A 42-amino-acid chain; its full sequence is Thymosin beta-10 (42 aa).

Composition is skewed to basic and acidic residues over residues 1–25 (MADK…ETQE) and 33–42 (ETIEQEKQAK). Residues 1–42 (MADKPDMGEINSFDKAKLKKTETQEKNTLPTKETIEQEKQAK) are disordered. A2 carries the post-translational modification N-acetylalanine. K4 is modified (N6-acetyllysine). A Phosphoserine modification is found at S12. Residue K15 is modified to N6-acetyllysine. T21, T23, and T34 each carry phosphothreonine. K39 is modified (N6-acetyllysine).

It belongs to the thymosin beta family.

Its subcellular location is the cytoplasm. It is found in the cytoskeleton. Functionally, plays an important role in the organization of the cytoskeleton. Binds to and sequesters actin monomers (G actin) and therefore inhibits actin polymerization. In Sus scrofa (Pig), this protein is Thymosin beta-10 (TMSB10).